The sequence spans 191 residues: Protein GrpE (191 aa).

Belongs to the GrpE family. Homodimer.

Its subcellular location is the cytoplasm. In terms of biological role, participates actively in the response to hyperosmotic and heat shock by preventing the aggregation of stress-denatured proteins, in association with DnaK and GrpE. It is the nucleotide exchange factor for DnaK and may function as a thermosensor. Unfolded proteins bind initially to DnaJ; upon interaction with the DnaJ-bound protein, DnaK hydrolyzes its bound ATP, resulting in the formation of a stable complex. GrpE releases ADP from DnaK; ATP binding to DnaK triggers the release of the substrate protein, thus completing the reaction cycle. Several rounds of ATP-dependent interactions between DnaJ, DnaK and GrpE are required for fully efficient folding. This is Protein GrpE from Listeria monocytogenes serotype 4a (strain HCC23).